Here is a 164-residue protein sequence, read N- to C-terminus: Lectin (164 aa).

The first 15 residues, 1-15, serve as a signal peptide directing secretion; that stretch reads TVATILTILASTCMA. Residues 16 to 125 form the Bulb-type lectin domain; sequence RNVLVNNEGL…DIWSTGTYRK (110 aa). Cys-44 and Cys-68 are oxidised to a cystine.

As to quaternary structure, homotetramer. Post-translationally, not glycosylated.

Mannose-specific lectin. Induces a Th1-type immune response in vitro. Causes a 4-fold increase in the proliferation of murine thymocytes and a significant increase in the production of nitric oxide at 24 hours in a macrophage cell line. Stimulates the production of the pro-inflammatory cytokines TNF and IL12 by rat peritoneal macrophages in a dose-dependent manner and of the cytokines IFNG and IL2 in murine thymocytes. Has hemagglutination activity towards rabbit erythrocytes. This is Lectin from Allium cepa (Onion).